Here is a 253-residue protein sequence, read N- to C-terminus: Probable U2 small nuclear ribonucleoprotein A' (253 aa).

LRR repeat units follow at residues 20 to 41 (NMRE…GVTR), 43 to 64 (QFDV…PTFS), 65 to 86 (RLNT…IATK), and 89 to 110 (NLKT…EPLA). The LRRCT domain maps to 123–161 (NPITHKDNYRMYMIYKLPTVRVIDFNRVRLTEREAAKKM). Disordered regions lie at residues 163 to 205 (KGKS…EDRE) and 232 to 253 (VPEK…AMES). Basic and acidic residues predominate over residues 169-182 (KARDAIQKSVHTED).

The protein belongs to the U2 small nuclear ribonucleoprotein A family. As to quaternary structure, interacts with rnp-3.

The protein localises to the nucleus. Functionally, this protein is associated with sn-RNP U2. It helps the A' protein to bind stem loop IV of U2 snRNA. Required maternally for early embryonic development and zygotically for germline and somatic development. Has a role in the switch from mitosis to meiosis. Might function in alternative splicing. The sequence is that of Probable U2 small nuclear ribonucleoprotein A' (mog-2) from Caenorhabditis elegans.